The following is a 187-amino-acid chain: Macro domain-containing protein MM_0177 (187 aa).

In terms of domain architecture, Macro spans 8-187; sequence VEEGIRMELN…SIKKALSKIL (180 aa).

The protein belongs to the MacroD-type family.

The protein is Macro domain-containing protein MM_0177 of Methanosarcina mazei (strain ATCC BAA-159 / DSM 3647 / Goe1 / Go1 / JCM 11833 / OCM 88) (Methanosarcina frisia).